The chain runs to 493 residues: Transmembrane and coiled-coil domain-containing protein 6 (493 aa).

Residues glycine 15–glutamate 84 adopt a coiled-coil conformation. The next 2 helical transmembrane spans lie at valine 338–proline 358 and proline 386–cysteine 406.

Its subcellular location is the membrane. In Homo sapiens (Human), this protein is Transmembrane and coiled-coil domain-containing protein 6 (TMCO6).